The primary structure comprises 141 residues: Auxin-responsive protein SAUR61 (141 aa).

Belongs to the ARG7 family.

It localises to the cell membrane. Its function is as follows. May promote auxin-stimulated organ elongation, such as hypocotyls, stamen filaments and petals. The chain is Auxin-responsive protein SAUR61 from Arabidopsis thaliana (Mouse-ear cress).